The chain runs to 209 residues: MKDPNTIPPWRCTDFNAWCIAVDKSTNVKNKEELLSTLTYFINYEIEMGQTYPIDIKMTRNEAEDFFFKFCTVICVPVESETSPAPDLATASIDWKTSLLGAFYIKPNYPGRCSHICNGGFLVSPSHRSKGIGRNLANAYLYFAPRIGFKSSVFNLVFATNIKSIRLWERLNFTRAGIIKDAGRLKGHEGYVDAYIYQYHFPSLEDALK.

The region spanning 26 to 202 is the N-acetyltransferase domain; the sequence is TNVKNKEELL…DAYIYQYHFP (177 aa). Asn-118 provides a ligand contact to substrate. Residue 128 to 133 coordinates CoA; that stretch reads RSKGIG. A substrate-binding site is contributed by 155 to 156; the sequence is NL.

The protein belongs to the acetyltransferase family. Homodimer.

It localises to the cytoplasm. The protein resides in the mitochondrion. The catalysed reaction is L-glutamate 5-semialdehyde + acetyl-CoA = N-acetyl-L-glutamate 5-semialdehyde + CoA + H(+). Functionally, N-acetyltransferase involved in oxidative stress resistance. Acetylates the toxic proline metabolism intermediate (S)-1-pyrroline-5-carboxylate (P5C), or more likely its spontaneously forming tautomer glutamate-5-semialdehyde (GSA) into N-acetyl-GSA for arginine synthesis in the mitochondria. P5C has been shown to increase the levels of reactive oxygen species (ROS) in the cell by inhibiting the function of the respiratory chain in the mitochondria. The enzyme is able to reduce intracellular ROS levels under P5C-induced oxidative stress and protects cells from damage by oxidative stress. Also acetylates and thereby detoxifies the proline analog azetidine-2-carboxylate (AZC), however it is unlikely that AZC is a natural substrate as it occurs only in plants belonging to the Lilaceae family. This chain is N-acetyltransferase aca1, found in Schizosaccharomyces pombe (strain 972 / ATCC 24843) (Fission yeast).